The chain runs to 361 residues: Protein RecA (361 aa).

ATP is bound at residue 77-84 (GPESSGKT).

It belongs to the RecA family.

Its subcellular location is the cytoplasm. In terms of biological role, can catalyze the hydrolysis of ATP in the presence of single-stranded DNA, the ATP-dependent uptake of single-stranded DNA by duplex DNA, and the ATP-dependent hybridization of homologous single-stranded DNAs. It interacts with LexA causing its activation and leading to its autocatalytic cleavage. The polypeptide is Protein RecA (Brucella anthropi (strain ATCC 49188 / DSM 6882 / CCUG 24695 / JCM 21032 / LMG 3331 / NBRC 15819 / NCTC 12168 / Alc 37) (Ochrobactrum anthropi)).